The primary structure comprises 470 residues: Maltose fermentation regulatory protein YPR196W (470 aa).

Positions 8-34 (CDCCRVRRVKCDRNRPCDRCRQRNLRC) form a DNA-binding region, zn(2)-C6 fungal-type. A Nuclear localization signal motif is present at residues 41 to 49 (RKRGPKSIG).

Belongs to the MAL13 family.

The protein resides in the nucleus. May regulate the transcription of maltase and maltose permease genes. The chain is Maltose fermentation regulatory protein YPR196W from Saccharomyces cerevisiae (strain ATCC 204508 / S288c) (Baker's yeast).